The following is an 85-amino-acid chain: Small ribosomal subunit protein uS17 (85 aa).

Belongs to the universal ribosomal protein uS17 family. As to quaternary structure, part of the 30S ribosomal subunit.

Its function is as follows. One of the primary rRNA binding proteins, it binds specifically to the 5'-end of 16S ribosomal RNA. The polypeptide is Small ribosomal subunit protein uS17 (Syntrophus aciditrophicus (strain SB)).